Consider the following 146-residue polypeptide: Hemoglobin cathodic subunit beta (146 aa).

Positions 2-146 (EWSASERSTI…VVSALSKQYF (145 aa)) constitute a Globin domain. The heme b site is built by His63 and His92.

It belongs to the globin family. As to quaternary structure, heterotetramer of two alpha chains and two beta chains. Red blood cells.

Involved in oxygen transport from gills to the various peripheral tissues. The chain is Hemoglobin cathodic subunit beta (hbb2) from Anguilla anguilla (European freshwater eel).